Here is a 153-residue protein sequence, read N- to C-terminus: Nucleoside diphosphate kinase (153 aa).

Lys-11, Phe-59, Arg-87, Thr-93, Arg-104, and Asn-114 together coordinate ATP. His-117 (pros-phosphohistidine intermediate) is an active-site residue.

This sequence belongs to the NDK family. In terms of assembly, homotrimer. Mg(2+) is required as a cofactor.

It carries out the reaction a 2'-deoxyribonucleoside 5'-diphosphate + ATP = a 2'-deoxyribonucleoside 5'-triphosphate + ADP. It catalyses the reaction a ribonucleoside 5'-diphosphate + ATP = a ribonucleoside 5'-triphosphate + ADP. Its function is as follows. Major role in the synthesis of nucleoside triphosphates other than ATP. The ATP gamma phosphate is transferred to the NDP beta phosphate via a ping-pong mechanism, using a phosphorylated active-site intermediate. The chain is Nucleoside diphosphate kinase (ndk1) from Aspergillus fumigatus (strain ATCC MYA-4609 / CBS 101355 / FGSC A1100 / Af293) (Neosartorya fumigata).